Here is a 29-residue protein sequence, read N- to C-terminus: Cytochrome b6-f complex subunit 8 (29 aa).

Residues 3–23 (TVSLAWAALMVVFTFSLSLVV) traverse the membrane as a helical segment.

The protein belongs to the PetN family. As to quaternary structure, the 4 large subunits of the cytochrome b6-f complex are cytochrome b6, subunit IV (17 kDa polypeptide, PetD), cytochrome f and the Rieske protein, while the 4 small subunits are PetG, PetL, PetM and PetN. The complex functions as a dimer.

It is found in the plastid. The protein localises to the chloroplast thylakoid membrane. Its function is as follows. Component of the cytochrome b6-f complex, which mediates electron transfer between photosystem II (PSII) and photosystem I (PSI), cyclic electron flow around PSI, and state transitions. In Chloranthus spicatus (Chulantree), this protein is Cytochrome b6-f complex subunit 8.